Reading from the N-terminus, the 610-residue chain is Elongation factor 4 (610 aa).

Positions 7-189 constitute a tr-type G domain; it reads SRIRNFSIIA…AIVQRIPPPK (183 aa). GTP contacts are provided by residues 19–24 and 136–139; these read DHGKST and NKID.

It belongs to the TRAFAC class translation factor GTPase superfamily. Classic translation factor GTPase family. LepA subfamily.

Its subcellular location is the cell inner membrane. The catalysed reaction is GTP + H2O = GDP + phosphate + H(+). In terms of biological role, required for accurate and efficient protein synthesis under certain stress conditions. May act as a fidelity factor of the translation reaction, by catalyzing a one-codon backward translocation of tRNAs on improperly translocated ribosomes. Back-translocation proceeds from a post-translocation (POST) complex to a pre-translocation (PRE) complex, thus giving elongation factor G a second chance to translocate the tRNAs correctly. Binds to ribosomes in a GTP-dependent manner. This is Elongation factor 4 from Thermus thermophilus (strain ATCC BAA-163 / DSM 7039 / HB27).